The primary structure comprises 509 residues: Histidine--tRNA ligase, cytoplasmic (509 aa).

Position 2 is an N-acetylalanine (Ala2). Residues 3–59 (DRAALEELVRLQGAHVRGLKEQKASAEQIEEEVTKLLKLKAQLGQDEGKQKFVLKTP) enclose the WHEP-TRS domain. The residue at position 66 (Ser66) is a Phosphoserine. Residues 130 to 132 (DLT), Arg157, Gln173, Asp177, Arg326, and 330 to 331 (YY) contribute to the L-histidine site. At Ser356 the chain carries Phosphoserine.

Belongs to the class-II aminoacyl-tRNA synthetase family. As to quaternary structure, homodimer.

It localises to the cytoplasm. The enzyme catalyses tRNA(His) + L-histidine + ATP = L-histidyl-tRNA(His) + AMP + diphosphate + H(+). In terms of biological role, catalyzes the ATP-dependent ligation of histidine to the 3'-end of its cognate tRNA, via the formation of an aminoacyl-adenylate intermediate (His-AMP). Plays a role in axon guidance. The sequence is that of Histidine--tRNA ligase, cytoplasmic (Hars1) from Mus musculus (Mouse).